Reading from the N-terminus, the 274-residue chain is RNA polymerase sigma factor SigI4 (274 aa).

The Polymerase core binding signature appears at 87–100 (EEYSVGLMAFNEAI). A DNA-binding region (H-T-H motif) is located at residues 226-245 (LSELMGLVNVHRKTVERNRK).

It belongs to the sigma-70 factor family. SigI subfamily. Interacts with RsgI4.

It localises to the cytoplasm. With respect to regulation, negatively regulated by the anti-sigma-I factor RsgI4. Binding of the polysaccharide substrate to RsgI4 may lead to the release and activation of SigI4. Functionally, sigma factors are initiation factors that promote the attachment of RNA polymerase to specific initiation sites and are then released. This sigma factor is involved in regulation of cellulosomal genes via an external polysaccharide-sensing mechanism. In Acetivibrio thermocellus (strain ATCC 27405 / DSM 1237 / JCM 9322 / NBRC 103400 / NCIMB 10682 / NRRL B-4536 / VPI 7372) (Clostridium thermocellum), this protein is RNA polymerase sigma factor SigI4.